The chain runs to 283 residues: Bifunctional protein FolD (283 aa).

NADP(+) contacts are provided by residues 166–168 (GRS) and S191.

Belongs to the tetrahydrofolate dehydrogenase/cyclohydrolase family. Homodimer.

It catalyses the reaction (6R)-5,10-methylene-5,6,7,8-tetrahydrofolate + NADP(+) = (6R)-5,10-methenyltetrahydrofolate + NADPH. The catalysed reaction is (6R)-5,10-methenyltetrahydrofolate + H2O = (6R)-10-formyltetrahydrofolate + H(+). It participates in one-carbon metabolism; tetrahydrofolate interconversion. Its function is as follows. Catalyzes the oxidation of 5,10-methylenetetrahydrofolate to 5,10-methenyltetrahydrofolate and then the hydrolysis of 5,10-methenyltetrahydrofolate to 10-formyltetrahydrofolate. The chain is Bifunctional protein FolD from Pediococcus pentosaceus (strain ATCC 25745 / CCUG 21536 / LMG 10740 / 183-1w).